Consider the following 712-residue polypeptide: Polyribonucleotide nucleotidyltransferase (712 aa).

2 residues coordinate Mg(2+): D487 and D493. Residues P554 to I613 enclose the KH domain. The S1 motif domain occupies G623 to K691.

This sequence belongs to the polyribonucleotide nucleotidyltransferase family. Mg(2+) serves as cofactor.

It localises to the cytoplasm. The enzyme catalyses RNA(n+1) + phosphate = RNA(n) + a ribonucleoside 5'-diphosphate. Functionally, involved in mRNA degradation. Catalyzes the phosphorolysis of single-stranded polyribonucleotides processively in the 3'- to 5'-direction. This Rhizobium johnstonii (strain DSM 114642 / LMG 32736 / 3841) (Rhizobium leguminosarum bv. viciae) protein is Polyribonucleotide nucleotidyltransferase.